Consider the following 60-residue polypeptide: Toxin FS-2 (60 aa).

4 cysteine pairs are disulfide-bonded: cysteine 3-cysteine 22, cysteine 17-cysteine 39, cysteine 41-cysteine 52, and cysteine 53-cysteine 58. The segment at 41-48 is important for binding to L-type calcium channels; it reads CPTAMWPY.

This sequence belongs to the three-finger toxin family. Short-chain subfamily. L-type calcium blocker sub-subfamily. As to expression, expressed by the venom gland.

It localises to the secreted. Its function is as follows. Specific blocker of the voltage-dependent L-type calcium channel (Cav1/CACNA1). Inhibits cardiac contractions. The chain is Toxin FS-2 from Dendroaspis polylepis polylepis (Black mamba).